A 363-amino-acid chain; its full sequence is Dihydroorotate dehydrogenase (quinone) (363 aa).

Residues 67 to 71 and threonine 91 each bind FMN; that span reads AGFDK. Residue lysine 71 coordinates substrate. 116-120 provides a ligand contact to substrate; sequence NRMGF. Residues asparagine 156 and asparagine 189 each coordinate FMN. Asparagine 189 contacts substrate. The active-site Nucleophile is the serine 192. Substrate is bound at residue asparagine 194. Positions 231 and 259 each coordinate FMN. 260 to 261 lines the substrate pocket; it reads NT. Residues glycine 287, glycine 316, and 337-338 each bind FMN; that span reads YT.

Belongs to the dihydroorotate dehydrogenase family. Type 2 subfamily. In terms of assembly, monomer. It depends on FMN as a cofactor.

It localises to the cell membrane. The enzyme catalyses (S)-dihydroorotate + a quinone = orotate + a quinol. Its pathway is pyrimidine metabolism; UMP biosynthesis via de novo pathway; orotate from (S)-dihydroorotate (quinone route): step 1/1. Functionally, catalyzes the conversion of dihydroorotate to orotate with quinone as electron acceptor. The chain is Dihydroorotate dehydrogenase (quinone) from Kocuria rhizophila (strain ATCC 9341 / DSM 348 / NBRC 103217 / DC2201).